The chain runs to 386 residues: Protein-glutamate methylesterase/protein-glutamine glutaminase 3 (386 aa).

The Response regulatory domain maps to lysine 4 to leucine 121. Residue aspartate 55 is modified to 4-aspartylphosphate. Low complexity predominate over residues serine 132–serine 194. Residues serine 132 to alanine 197 are disordered. One can recognise a CheB-type methylesterase domain in the interval proline 191–glutamate 383. Active-site residues include serine 210, histidine 237, and aspartate 330.

The protein belongs to the CheB family. Phosphorylated by CheA. Phosphorylation of the N-terminal regulatory domain activates the methylesterase activity.

It localises to the cytoplasm. It catalyses the reaction [protein]-L-glutamate 5-O-methyl ester + H2O = L-glutamyl-[protein] + methanol + H(+). It carries out the reaction L-glutaminyl-[protein] + H2O = L-glutamyl-[protein] + NH4(+). Involved in chemotaxis. Part of a chemotaxis signal transduction system that modulates chemotaxis in response to various stimuli. Catalyzes the demethylation of specific methylglutamate residues introduced into the chemoreceptors (methyl-accepting chemotaxis proteins or MCP) by CheR. Also mediates the irreversible deamidation of specific glutamine residues to glutamic acid. The chain is Protein-glutamate methylesterase/protein-glutamine glutaminase 3 from Pseudomonas syringae pv. syringae (strain B728a).